We begin with the raw amino-acid sequence, 604 residues long: Putative ankyrin repeat protein L56 (604 aa).

ANK repeat units lie at residues 77–106, 135–164, 166–189, 190–219, 221–247, 248–277, 314–341, 342–371, 380–410, 445–474, 475–504, 505–534, and 535–565; these read IDRY…DILV, FFKS…NADG, LSAC…YDDN, TIYH…EDKR, NVFI…KWKI, DVEF…DSKY, KFSK…NENV, DLRE…EFTD, EHIT…SRSY, YSQA…DIKP, ITNI…DITI, NDNR…DIRT, and DDDY…EPSN.

The chain is Putative ankyrin repeat protein L56 from Acanthamoeba polyphaga (Amoeba).